A 381-amino-acid polypeptide reads, in one-letter code: uncharacterized protein (381 aa).

A helical membrane pass occupies residues 3 to 23 (GAVAGLVFLAVLVIFAIIVVA).

The protein belongs to the band 7/mec-2 family.

The protein localises to the membrane. This is an uncharacterized protein from Mycobacterium bovis (strain ATCC BAA-935 / AF2122/97).